We begin with the raw amino-acid sequence, 222 residues long: Octanoyltransferase (222 aa).

Positions 32-207 (RDRPDVLMLL…AFARVFGVQC (176 aa)) constitute a BPL/LPL catalytic domain. Residues 72–79 (RGGEVTYH), 139–141 (ALG), and 152–154 (GFA) each bind substrate. C170 acts as the Acyl-thioester intermediate in catalysis.

This sequence belongs to the LipB family.

It localises to the cytoplasm. It carries out the reaction octanoyl-[ACP] + L-lysyl-[protein] = N(6)-octanoyl-L-lysyl-[protein] + holo-[ACP] + H(+). The protein operates within protein modification; protein lipoylation via endogenous pathway; protein N(6)-(lipoyl)lysine from octanoyl-[acyl-carrier-protein]: step 1/2. Catalyzes the transfer of endogenously produced octanoic acid from octanoyl-acyl-carrier-protein onto the lipoyl domains of lipoate-dependent enzymes. Lipoyl-ACP can also act as a substrate although octanoyl-ACP is likely to be the physiological substrate. The chain is Octanoyltransferase from Gloeobacter violaceus (strain ATCC 29082 / PCC 7421).